The primary structure comprises 29 residues: U-limacoditoxin(12)-Dv72 (29 aa).

An N-terminal signal peptide occupies residues 1-15; that stretch reads MNFGMLKLLTVLIIC. Asparagine amide is present on Asn-27.

The protein belongs to the limacoditoxin-12 family. Expressed by the venom secretory cell of the spine. The spine is a cuticular structure containing a single large nucleated venom-secreting cell at its base. It is an independent unit capable of producing, storing and injecting venom. On the back of D.vulnerans caterpillars, spines are grouped together by 50 to 100 to form scoli, of which there are eight in D.vulnerans.

The protein localises to the secreted. Its function is as follows. Probable toxin. Does not show insecticidal, antimicrobial and antiparasitic activities. Does not induce increase in intracellular calcium in mouse DRG neurons, suggesting that it does not induce pain. The chain is U-limacoditoxin(12)-Dv72 from Doratifera vulnerans (Mottled cup moth).